We begin with the raw amino-acid sequence, 217 residues long: Small ribosomal subunit protein uS3 (217 aa).

The 69-residue stretch at 38 to 106 (IRKFINKELA…QVHINIIEIK (69 aa)) folds into the KH type-2 domain.

It belongs to the universal ribosomal protein uS3 family. As to quaternary structure, part of the 30S ribosomal subunit. Forms a tight complex with proteins S10 and S14.

Its function is as follows. Binds the lower part of the 30S subunit head. Binds mRNA in the 70S ribosome, positioning it for translation. The polypeptide is Small ribosomal subunit protein uS3 (Streptococcus pyogenes serotype M6 (strain ATCC BAA-946 / MGAS10394)).